Here is a 212-residue protein sequence, read N- to C-terminus: Pyridoxine/pyridoxamine 5'-phosphate oxidase (212 aa).

Residues R61 to K66, Y76 to T77, K83, and Q105 contribute to the FMN site. K66 serves as a coordination point for substrate. Substrate is bound by residues Y123, R127, and S131. Residues Q140–S141 and W185 contribute to the FMN site. A substrate-binding site is contributed by R191 to H193. Residue R195 coordinates FMN.

This sequence belongs to the pyridoxamine 5'-phosphate oxidase family. In terms of assembly, homodimer. The cofactor is FMN.

The enzyme catalyses pyridoxamine 5'-phosphate + O2 + H2O = pyridoxal 5'-phosphate + H2O2 + NH4(+). The catalysed reaction is pyridoxine 5'-phosphate + O2 = pyridoxal 5'-phosphate + H2O2. The protein operates within cofactor metabolism; pyridoxal 5'-phosphate salvage; pyridoxal 5'-phosphate from pyridoxamine 5'-phosphate: step 1/1. It participates in cofactor metabolism; pyridoxal 5'-phosphate salvage; pyridoxal 5'-phosphate from pyridoxine 5'-phosphate: step 1/1. Functionally, catalyzes the oxidation of either pyridoxine 5'-phosphate (PNP) or pyridoxamine 5'-phosphate (PMP) into pyridoxal 5'-phosphate (PLP). This chain is Pyridoxine/pyridoxamine 5'-phosphate oxidase, found in Dichelobacter nodosus (strain VCS1703A).